The following is an 820-amino-acid chain: Leucine-rich repeat and guanylate kinase domain-containing protein (820 aa).

Residues 72–83 (EAEAEQEEKQQE) are compositionally biased toward basic and acidic residues. A disordered region spans residues 72-96 (EAEAEQEEKQQEDGESEESEESEMQ). Residues 84 to 94 (DGESEESEESE) are compositionally biased toward acidic residues. 9 LRR repeats span residues 129-149 (YLNLNLSHCELVDISILCGYV), 150-171 (HLQKLNLSGNRIEDLSCVSCMP), 172-193 (YLLELNASQNKLTTFFNFKPPQ), 194-215 (NLKKVDFSSNLISEMYDLSAYH), 216-237 (TLTQLILDNNEIEEITGLENCI), 238-259 (SLTHLSLAGNKITTIKGLGTLP), 260-280 (IKVLSLSNNMIETITGLEELK), 281-302 (ALQNLDLSHNQISSLQGLENHD), and 303-324 (LLEVINLEDNKIKELSEIEYIE). Residues 337 to 375 (NPIQTKPEYWFFVIYMLLRLTELDQQKIKVEEKVFAVNK) enclose the LRRCT domain. The Guanylate kinase-like domain maps to 414–597 (YPMLILTGPA…AYQKLSELIR (184 aa)). 421 to 428 (GPAACGKR) contributes to the ATP binding site. A disordered region spans residues 800–820 (TIMDPGSNTKPTLPPIPHGRR). Residues 811-820 (TLPPIPHGRR) are compositionally biased toward pro residues.

Interacts (via guanylate kinase-like domain) with RIMBP3 (via coiled-coil region). Interacts (via guanylate kinase-like domain) with HOOK2. Interacts (via LRRCT domain) with KLC3. Interacts with HOOK1 and HOOK3. In terms of tissue distribution, highly expressed in the testis. During spermatid development is initially localized to a supra-nuclear region of round spermatids, and is particularly evident at the leading edge of the developing acrosome and acroplaxome. As maturation proceeded and nuclear elongation initiated, LRGUK moves distally to ultimately reside on the microtubules of the manchette. LRGUK is also evident in the sperm basal body and the sperm tail.

The protein localises to the cytoplasmic vesicle. It is found in the secretory vesicle. Its subcellular location is the acrosome. It localises to the cytoplasm. The protein resides in the cytoskeleton. The protein localises to the cilium basal body. Its function is as follows. Involved in multiple aspects of sperm assembly including acrosome attachment, shaping of the sperm head and in the early aspects of axoneme development. Not essential for primary cilium biogenesis. In Mus musculus (Mouse), this protein is Leucine-rich repeat and guanylate kinase domain-containing protein (Lrguk).